Reading from the N-terminus, the 162-residue chain is MPSFDIVSELELFEVNHAVQNTQKEIQTRFDFRGQDVSIELNEKSKEIKISTESDFQCEQVYSMLENHFYKRKIDVQALDPQKATASGKNVVQVIKLKDGLDSDTAKKINKAIKESGIKVQSSIQGDKIRVTDKKRDTLQQVMTFLREQQFGLPLQFNNFKD.

It belongs to the YajQ family.

Nucleotide-binding protein. In Acinetobacter baylyi (strain ATCC 33305 / BD413 / ADP1), this protein is Nucleotide-binding protein ACIAD3137.